A 702-amino-acid chain; its full sequence is Polyribonucleotide nucleotidyltransferase (702 aa).

The Mg(2+) site is built by D485 and D491. A KH domain is found at P552–I611. Positions G621–K689 constitute an S1 motif domain.

It belongs to the polyribonucleotide nucleotidyltransferase family. The cofactor is Mg(2+).

Its subcellular location is the cytoplasm. It carries out the reaction RNA(n+1) + phosphate = RNA(n) + a ribonucleoside 5'-diphosphate. In terms of biological role, involved in mRNA degradation. Catalyzes the phosphorolysis of single-stranded polyribonucleotides processively in the 3'- to 5'-direction. The protein is Polyribonucleotide nucleotidyltransferase of Clostridium perfringens (strain SM101 / Type A).